We begin with the raw amino-acid sequence, 449 residues long: Phosphoglucosamine mutase (449 aa).

Catalysis depends on Ser101, which acts as the Phosphoserine intermediate. 4 residues coordinate Mg(2+): Ser101, Asp242, Asp244, and Asp246. A Phosphoserine modification is found at Ser101.

This sequence belongs to the phosphohexose mutase family. The cofactor is Mg(2+). Post-translationally, activated by phosphorylation.

The catalysed reaction is alpha-D-glucosamine 1-phosphate = D-glucosamine 6-phosphate. In terms of biological role, catalyzes the conversion of glucosamine-6-phosphate to glucosamine-1-phosphate. This chain is Phosphoglucosamine mutase, found in Methylocella silvestris (strain DSM 15510 / CIP 108128 / LMG 27833 / NCIMB 13906 / BL2).